We begin with the raw amino-acid sequence, 1038 residues long: Kinesin-like protein KIF17 (1038 aa).

In terms of domain architecture, Kinesin motor spans 5–335 (SVKVVVRCRP…LRYANRAKNI (331 aa)). ATP is bound at residue 91–98 (GQTGSGKS). Positions 346-470 (KDALLREYQE…ETEAILKAEV (125 aa)) form a coiled coil. Disordered stretches follow at residues 379–401 (TQTP…VQQD), 503–559 (LSMP…GPEE), and 636–657 (DSSQ…LLEP). Composition is skewed to polar residues over residues 533–551 (SEFS…SATS) and 636–651 (DSSQ…QPSS). Positions 748 to 855 (QQVLARLQLL…QLEKIDYLAT (108 aa)) form a coiled coil. 2 disordered regions span residues 916-940 (VVPT…PHMQ) and 976-1038 (MKSL…GEPL). The span at 983 to 1000 (NSPPGLNSSLSNNSALPP) shows a compositional bias: low complexity.

Belongs to the TRAFAC class myosin-kinesin ATPase superfamily. Kinesin family. In terms of assembly, homodimer. Interacts with APBA1 (via PDZ domain); the interaction is direct and is required for association of KIF17 with the cargo that is to be transported. Interacts with IFT B complex components IFT52 and IFT57. Interacts with IFT70B. Interacts with PIWIL1. Interacts with TBATA. As to expression, highly expressed in the gray matter of the brain, especially in the hippocampus.

It localises to the cytoplasm. It is found in the cytoskeleton. The protein localises to the cell projection. The protein resides in the cilium. Its subcellular location is the dendrite. In terms of biological role, dendrite-specific motor protein which, in association with the Apba1-containing complex (LIN-10-LIN-2-LIN-7 complex), transports vesicles containing N-methyl-D-aspartate (NMDA) receptor subunit NR2B along microtubules. This Mus musculus (Mouse) protein is Kinesin-like protein KIF17 (Kif17).